A 330-amino-acid chain; its full sequence is Glycerol-3-phosphate dehydrogenase [NAD(P)+] (330 aa).

NADPH is bound by residues Ser-10, Trp-11, Arg-31, and Lys-105. Sn-glycerol 3-phosphate contacts are provided by Lys-105, Gly-135, and Ser-137. Position 139 (Ala-139) interacts with NADPH. Sn-glycerol 3-phosphate is bound by residues Lys-190, Asp-243, Ser-253, Arg-254, and Asn-255. Lys-190 serves as the catalytic Proton acceptor. NADPH is bound at residue Arg-254. The NADPH site is built by Val-278 and Glu-280.

Belongs to the NAD-dependent glycerol-3-phosphate dehydrogenase family.

The protein localises to the cytoplasm. The catalysed reaction is sn-glycerol 3-phosphate + NAD(+) = dihydroxyacetone phosphate + NADH + H(+). It carries out the reaction sn-glycerol 3-phosphate + NADP(+) = dihydroxyacetone phosphate + NADPH + H(+). Its pathway is membrane lipid metabolism; glycerophospholipid metabolism. Functionally, catalyzes the reduction of the glycolytic intermediate dihydroxyacetone phosphate (DHAP) to sn-glycerol 3-phosphate (G3P), the key precursor for phospholipid synthesis. The sequence is that of Glycerol-3-phosphate dehydrogenase [NAD(P)+] from Solidesulfovibrio magneticus (strain ATCC 700980 / DSM 13731 / RS-1) (Desulfovibrio magneticus).